Consider the following 508-residue polypeptide: Anthranilate synthase component 1 (508 aa).

Residues S51 and 283-285 (PYM) each bind L-tryptophan. A chorismate-binding site is contributed by 323–324 (GT). E350 contributes to the Mg(2+) binding site. Residues Y438, R458, 477-479 (GAG), and G479 each bind chorismate. Residue E492 participates in Mg(2+) binding.

It belongs to the anthranilate synthase component I family. Heterotetramer consisting of two non-identical subunits: a beta subunit (TrpG) and a large alpha subunit (TrpE). Mg(2+) serves as cofactor.

The catalysed reaction is chorismate + L-glutamine = anthranilate + pyruvate + L-glutamate + H(+). The protein operates within amino-acid biosynthesis; L-tryptophan biosynthesis; L-tryptophan from chorismate: step 1/5. Its activity is regulated as follows. Feedback inhibited by tryptophan. Its function is as follows. Part of a heterotetrameric complex that catalyzes the two-step biosynthesis of anthranilate, an intermediate in the biosynthesis of L-tryptophan. In the first step, the glutamine-binding beta subunit (TrpG) of anthranilate synthase (AS) provides the glutamine amidotransferase activity which generates ammonia as a substrate that, along with chorismate, is used in the second step, catalyzed by the large alpha subunit of AS (TrpE) to produce anthranilate. In the absence of TrpG, TrpE can synthesize anthranilate directly from chorismate and high concentrations of ammonia. This Synechocystis sp. (strain ATCC 27184 / PCC 6803 / Kazusa) protein is Anthranilate synthase component 1 (trpE).